Consider the following 650-residue polypeptide: Macrolide export ATP-binding/permease protein MacB (650 aa).

Residues L6–P244 form the ABC transporter domain. G42–S49 contacts ATP. Positions Q227–T246 are disordered. A compositionally biased stretch (low complexity) spans A233–T246. A run of 4 helical transmembrane segments spans residues F275–G295, L523–M543, L580–F600, and S615–A635.

This sequence belongs to the ABC transporter superfamily. Macrolide exporter (TC 3.A.1.122) family. As to quaternary structure, homodimer. Part of the tripartite efflux system MacAB-TolC, which is composed of an inner membrane transporter, MacB, a periplasmic membrane fusion protein, MacA, and an outer membrane component, TolC. The complex forms a large protein conduit and can translocate molecules across both the inner and outer membranes. Interacts with MacA.

The protein resides in the cell inner membrane. In terms of biological role, part of the tripartite efflux system MacAB-TolC. MacB is a non-canonical ABC transporter that contains transmembrane domains (TMD), which form a pore in the inner membrane, and an ATP-binding domain (NBD), which is responsible for energy generation. Confers resistance against macrolides. This chain is Macrolide export ATP-binding/permease protein MacB, found in Pectobacterium atrosepticum (strain SCRI 1043 / ATCC BAA-672) (Erwinia carotovora subsp. atroseptica).